Consider the following 76-residue polypeptide: RNA-binding protein KhpA (76 aa).

Residues 30–76 (GEVLEVRVNPEDLGRVIGRSGRTAKALRTLVTALADGRRVRVDVVDD) enclose the KH domain.

This sequence belongs to the KhpA RNA-binding protein family.

It is found in the cytoplasm. Functionally, a probable RNA-binding protein. The protein is RNA-binding protein KhpA of Leifsonia xyli subsp. xyli (strain CTCB07).